Consider the following 371-residue polypeptide: MTAESAPPPPPQPETLAAVKEERGEAAAAGAGVPAEAAGRGAGGRRRKRPLQRGKPPYSYIALIAMAIAHAPERRLTLGGIYKFITERFPFYRDNPKKWQNSIRHNLTLNDCFLKIPREAGRPGKGNYWALDPNAEDMFESGSFLRRRKRFKRSDLSTYPAYMHDAAAAAAAAAAAIFPGAVPAARPAYPGAVYAGYAPPLAAPPPVYYPAASPGPCRVFGLVPERPLSPDLGPAPSAAGGSCAFAAAAGAAGTGSFQPAVCTGARPVNPAAYAAAYAGPDGAYPQGASSALFAAAAGRLAGPASPPAGGGSGGVEATVDFYGRTSPGQFGAALGPCYNPGGQLGAGGGGAYHSRHATAYPGAVDRFVSAM.

Positions 21–53 (EERGEAAAAGAGVPAEAAGRGAGGRRRKRPLQR) are disordered. The span at 26–39 (AAAAGAGVPAEAAG) shows a compositional bias: low complexity. Over residues 43–52 (GGRRRKRPLQ) the composition is skewed to basic residues. The segment at residues 55–149 (KPPYSYIALI…ESGSFLRRRK (95 aa)) is a DNA-binding region (fork-head).

Post-translationally, phosphorylated. As to expression, expressed in Rathke pouch, in thyroid, and in the epithelium of the pharyngeal wall and arches, whereas it is absent in the epithelium of the pharyngeal pouches.

The protein localises to the nucleus. In terms of biological role, transcription factor that binds consensus sites on a variety of gene promoters and activate their transcription. Involved in proper palate formation, most probably through the expression of MSX1 and TGFB3 genes which are direct targets of this transcription factor. Also implicated in thyroid gland morphogenesis. May indirectly play a role in cell growth and migration through the regulation of WNT5A expression. This Mus musculus (Mouse) protein is Forkhead box protein E1 (Foxe1).